We begin with the raw amino-acid sequence, 537 residues long: Chaperonin GroEL (537 aa).

Residues 29-32 (TLGP), 86-90 (DGTTT), Gly413, 477-479 (NAA), and Asp493 contribute to the ATP site.

The protein belongs to the chaperonin (HSP60) family. Forms a cylinder of 14 subunits composed of two heptameric rings stacked back-to-back. Interacts with the co-chaperonin GroES.

The protein localises to the cytoplasm. The enzyme catalyses ATP + H2O + a folded polypeptide = ADP + phosphate + an unfolded polypeptide.. In terms of biological role, together with its co-chaperonin GroES, plays an essential role in assisting protein folding. The GroEL-GroES system forms a nano-cage that allows encapsulation of the non-native substrate proteins and provides a physical environment optimized to promote and accelerate protein folding. This chain is Chaperonin GroEL, found in Lactobacillus delbrueckii subsp. bulgaricus (strain ATCC 11842 / DSM 20081 / BCRC 10696 / JCM 1002 / NBRC 13953 / NCIMB 11778 / NCTC 12712 / WDCM 00102 / Lb 14).